Consider the following 1005-residue polypeptide: Ephrin type-A receptor 5 (1005 aa).

A disordered region spans residues 1–24 (MRGSGPRGAGRRRTQGRGGGGDTP). Residues 1–26 (MRGSGPRGAGRRRTQGRGGGGDTPRV) form the signal peptide. Residues 27–575 (PASLAGCYSA…GASNDQSQIP (549 aa)) lie on the Extracellular side of the membrane. Residues 62–240 (EVNLLDSRTV…YYKKCPSVVR (179 aa)) form the Eph LBD domain. 6 N-linked (GlcNAc...) asparagine glycosylation sites follow: Asn-266, Asn-301, Asn-371, Asn-425, Asn-438, and Asn-463. Fibronectin type-III domains are found at residues 359-469 (PPSA…TNQA) and 470-564 (APSP…TTPV). Residues 576–596 (IIGVSVTVGVILLAVMIGFLL) traverse the membrane as a helical segment. Topologically, residues 597–1005 (SGSCCECGCG…MDAVAQVTLE (409 aa)) are cytoplasmic. A phosphotyrosine; by autocatalysis mark is found at Tyr-652 and Tyr-658. Residues 677-938 (ITIERVIGAG…DIVNMLDKLI (262 aa)) enclose the Protein kinase domain. Residues 683–691 (IGAGEFGEV) and Lys-709 contribute to the ATP site. Catalysis depends on Asp-802, which acts as the Proton acceptor. 2 positions are modified to phosphotyrosine; by autocatalysis: Tyr-835 and Tyr-984. One can recognise an SAM domain in the interval 967 to 1005 (GAYRSVGEWLEATKMGRYTEIFMENGYSSMDAVAQVTLE).

This sequence belongs to the protein kinase superfamily. Tyr protein kinase family. Ephrin receptor subfamily. As to quaternary structure, heterotetramer upon binding of the ligand. The heterotetramer is composed of an ephrin dimer and a receptor dimer. Oligomerization is probably required to induce biological responses. Interacts (via SAM domain) with SAMD5 (via SAM domain). In terms of processing, phosphorylated. Phosphorylation is stimulated by the ligand EFNA5. Dephosphorylation upon stimulation by glucose, inhibits EPHA5 forward signaling and results in insulin secretion. In terms of tissue distribution, almost exclusively expressed in the nervous system. Predominantly expressed in neurons.

The protein resides in the cell membrane. It localises to the cell projection. Its subcellular location is the axon. The protein localises to the dendrite. The enzyme catalyses L-tyrosyl-[protein] + ATP = O-phospho-L-tyrosyl-[protein] + ADP + H(+). Functionally, receptor tyrosine kinase which binds promiscuously GPI-anchored ephrin-A family ligands residing on adjacent cells, leading to contact-dependent bidirectional signaling into neighboring cells. The signaling pathway downstream of the receptor is referred to as forward signaling while the signaling pathway downstream of the ephrin ligand is referred to as reverse signaling. Among GPI-anchored ephrin-A ligands, EFNA5 most probably constitutes the cognate/functional ligand for EPHA5. Functions as an axon guidance molecule during development and may be involved in the development of the retinotectal, entorhino-hippocampal and hippocamposeptal pathways. Together with EFNA5 plays also a role in synaptic plasticity in adult brain through regulation of synaptogenesis. In addition to its function in the nervous system, the interaction of EPHA5 with EFNA5 mediates communication between pancreatic islet cells to regulate glucose-stimulated insulin secretion. In Rattus norvegicus (Rat), this protein is Ephrin type-A receptor 5 (Epha5).